Consider the following 1081-residue polypeptide: DNA polymerase delta catalytic subunit (1081 aa).

Residues 1 to 22 (MTSKRPGGSSFQPEVKRKRESD) are disordered. Residues cysteine 981, cysteine 984, cysteine 998, and cysteine 1001 each coordinate Zn(2+). Residues 981–1001 (CLGCKSVLPRAESENAVCKHC) form a CysA-type zinc finger. [4Fe-4S] cluster is bound by residues cysteine 1030, cysteine 1033, cysteine 1043, and cysteine 1048. The short motif at 1030–1048 (CQNCAKTMQDKVNCSARDC) is the CysB motif element.

This sequence belongs to the DNA polymerase type-B family. Heterodimer with subunits of 125 kDa and 50 kDa. The 125 kDa subunit contains the polymerase active site and most likely the active site for the 3'-5' exonuclease activity. It depends on [4Fe-4S] cluster as a cofactor.

The protein resides in the nucleus. The catalysed reaction is DNA(n) + a 2'-deoxyribonucleoside 5'-triphosphate = DNA(n+1) + diphosphate. Functionally, possesses two enzymatic activities: DNA synthesis (polymerase) and an exonucleolytic activity that degrades single stranded DNA in the 3'- to 5'-direction. Required with its accessory proteins (proliferating cell nuclear antigen (PCNA) and replication factor C (RFC) or activator 1) for leading strand synthesis. Also involved in completing Okazaki fragments initiated by the DNA polymerase alpha/primase complex. The chain is DNA polymerase delta catalytic subunit from Caenorhabditis elegans.